A 371-amino-acid polypeptide reads, in one-letter code: Ferrochelatase (371 aa).

Fe cation-binding residues include His218 and Glu299.

This sequence belongs to the ferrochelatase family.

The protein localises to the cytoplasm. It catalyses the reaction heme b + 2 H(+) = protoporphyrin IX + Fe(2+). The protein operates within porphyrin-containing compound metabolism; protoheme biosynthesis; protoheme from protoporphyrin-IX: step 1/1. In terms of biological role, catalyzes the ferrous insertion into protoporphyrin IX. In Ralstonia nicotianae (strain ATCC BAA-1114 / GMI1000) (Ralstonia solanacearum), this protein is Ferrochelatase.